The sequence spans 624 residues: Kelch-like ECH-associated protein 1 (624 aa).

The tract at residues 1–27 is disordered; sequence MQPEPRPSGAGAHTQFLPLRSQRPEGA. Position 38 is an S-(2-succinyl)cysteine (Cys-38). The BTB domain maps to 77-149; the sequence is CDVTLQVKYE…AYTASISMGE (73 aa). An N5-[4-(S-L-cysteinyl)-5-methyl-1H-imidazol-2-yl]-L-ornithine (Arg-Cys) (interchain with C-151 in KEAP1) cross-link involves residue Arg-135. 2 positions are modified to S-(2-succinyl)cysteine: Cys-151 and Cys-241. Cys-151 carries the S-(2,3-dicarboxypropyl)cysteine; alternate modification. Cys-151 carries the post-translational modification S-nitrosocysteine; alternate. An N5-[4-(S-L-cysteinyl)-5-methyl-1H-imidazol-2-yl]-L-ornithine (Cys-Arg) (interchain with R-135 in KEAP1) cross-link involves residue Cys-151. Residues 184–286 form the BACK domain; it reads AIGIANFAEQ…TPHFLQMQLQ (103 aa). An S-(2,3-dicarboxypropyl)cysteine mark is found at Cys-257 and Cys-273. S-(2-succinyl)cysteine occurs at positions 288 and 319. S-(2,3-dicarboxypropyl)cysteine; alternate is present on Cys-288. Kelch repeat units lie at residues 327 to 372, 373 to 423, 424 to 470, 471 to 517, 519 to 564, and 565 to 611; these read LIYT…VVGG, LLYA…VIDG, HIYA…VLNR, LLYA…VLHN, IYAA…VHQG, and RIYV…VTME. S-cGMP-cysteine is present on Cys-434. The residue at position 613 (Cys-613) is an S-(2-succinyl)cysteine.

Belongs to the KEAP1 family. As to quaternary structure, component of the BCR(KEAP1) E3 ubiquitin ligase complex, at least composed of 2 molecules of CUL3, 2 molecules of KEAP1, and RBX1. Interacts with NFE2L2/NRF2; the interaction is direct. Forms a ternary complex with NFE2L2/NRF2 and PGAM5. Interacts with (phosphorylated) SQSTM1/p62; the interaction is direct and inactivates the BCR(KEAP1) complex by sequestering it in inclusion bodies, promoting its degradation. Interacts with NFE2L1. Interacts with BPTF and PTMA. Interacts with MAP1LC3B. Interacts indirectly with ENC1. Interacts with SESN1 and SESN2. Interacts with HSP90AA1 and HSP90AB1. Interacts with PGCKA1; this interaction prevents the ubiquitination of KEAP1 by TRIM25, thus protecting KEAP1 protein from degradation. In terms of processing, non-enzymatic covalent modifications of reactive cysteines by electrophile metabolites inactivate the BCR(KEAP1) complex. Accumulation of fumarate promotes the formation of cysteine S-succination (S-(2-succinyl)cysteine), leading to inactivate the BCR(KEAP1) complex and promote NFE2L2/NRF2 nuclear accumulation and activation. Nitric oxide-dependent 8-Nitro-cGMP formation promotes cysteine guanylation (S-cGMP-cysteine), leading to NFE2L2/NRF2 nuclear accumulation and activation. Itaconate, an anti-inflammatory metabolite generated in response to lipopolysaccharide, alkylates cysteines, activating NFE2L2/NRF2. Methylglyoxal, a reactive metabolite that accumulates when the glycolytic enzyme PGK1 is inhibited, promotes formation of a methylimidazole cross-link between proximal Cys-151 and Arg-135 on another KEAP1 molecule, resulting in an inactive dimer that inactivates the BCR(KEAP1) complex. Degraded via a proteasomal-independent process during selective autophagy: interaction with phosphorylated SQSTM1/p62 sequesters KEAP1 in inclusion bodies, leading to its degradation. Post-translationally, auto-ubiquitinated by the BCR(KEAP1) complex. Quinone-induced oxidative stress, but not sulforaphane, increases its ubiquitination. Ubiquitination and subsequent degradation is most pronounced following prolonged exposure of cells to oxidative stress, particularly in glutathione-deficient cells that are highly susceptible to oxidative stress. Deubiquitinated by USP25; leading to stabilization. Ubiquitinated by TRIM25; leading to degradation upon ER stress.

The protein resides in the cytoplasm. It localises to the nucleus. Its pathway is protein modification; protein ubiquitination. Its activity is regulated as follows. Ubiquitin ligase activity of the BCR(KEAP1) complex is inhibited by oxidative stress and electrophile metabolites such as sulforaphane. Electrophile metabolites react with reactive cysteine residues in KEAP1 and trigger non-enzymatic covalent modifications of these cysteine residues, leading to inactivate the ubiquitin ligase activity of the BCR(KEAP1) complex. Selective autophagy also inactivates the BCR(KEAP1) complex via interaction between KEAP1 and SQSTM1/p62, which sequesters the complex in inclusion bodies and promotes its degradation. Substrate-specific adapter of a BCR (BTB-CUL3-RBX1) E3 ubiquitin ligase complex that regulates the response to oxidative stress by targeting NFE2L2/NRF2 for ubiquitination. KEAP1 acts as a key sensor of oxidative and electrophilic stress: in normal conditions, the BCR(KEAP1) complex mediates ubiquitination and degradation of NFE2L2/NRF2, a transcription factor regulating expression of many cytoprotective genes. In response to oxidative stress, different electrophile metabolites trigger non-enzymatic covalent modifications of highly reactive cysteine residues in KEAP1, leading to inactivate the ubiquitin ligase activity of the BCR(KEAP1) complex, promoting NFE2L2/NRF2 nuclear accumulation and expression of phase II detoxifying enzymes. In response to selective autophagy, KEAP1 is sequestered in inclusion bodies following its interaction with SQSTM1/p62, leading to inactivation of the BCR(KEAP1) complex and activation of NFE2L2/NRF2. The BCR(KEAP1) complex also mediates ubiquitination of SQSTM1/p62, increasing SQSTM1/p62 sequestering activity and degradation. The BCR(KEAP1) complex also targets BPTF and PGAM5 for ubiquitination and degradation by the proteasome. The polypeptide is Kelch-like ECH-associated protein 1 (Sus scrofa (Pig)).